The following is a 101-amino-acid chain: Urease subunit beta (101 aa).

It belongs to the urease beta subunit family. Heterotrimer of UreA (gamma), UreB (beta) and UreC (alpha) subunits. Three heterotrimers associate to form the active enzyme.

The protein resides in the cytoplasm. The enzyme catalyses urea + 2 H2O + H(+) = hydrogencarbonate + 2 NH4(+). The protein operates within nitrogen metabolism; urea degradation; CO(2) and NH(3) from urea (urease route): step 1/1. This is Urease subunit beta from Thermosynechococcus vestitus (strain NIES-2133 / IAM M-273 / BP-1).